The chain runs to 346 residues: DNA primase small subunit PriS (346 aa).

Catalysis depends on residues aspartate 97, aspartate 99, and aspartate 280.

It belongs to the eukaryotic-type primase small subunit family. As to quaternary structure, heterodimer of a small subunit (PriS) and a large subunit (PriL). Mg(2+) serves as cofactor. It depends on Mn(2+) as a cofactor.

In terms of biological role, catalytic subunit of DNA primase, an RNA polymerase that catalyzes the synthesis of short RNA molecules used as primers for DNA polymerase during DNA replication. The small subunit contains the primase catalytic core and has DNA synthesis activity on its own. Binding to the large subunit stabilizes and modulates the activity, increasing the rate of DNA synthesis while decreasing the length of the DNA fragments, and conferring RNA synthesis capability. The DNA polymerase activity may enable DNA primase to also catalyze primer extension after primer synthesis. May also play a role in DNA repair. The protein is DNA primase small subunit PriS of Thermococcus kodakarensis (strain ATCC BAA-918 / JCM 12380 / KOD1) (Pyrococcus kodakaraensis (strain KOD1)).